The chain runs to 273 residues: Non-homologous end joining protein Ku (273 aa).

The region spanning 10 to 193 (AFGLVNVPVK…KVEIKPAELK (184 aa)) is the Ku domain. The segment at 111-273 (FLEPDSKSSK…KANSNVPTPP (163 aa)) is sufficient for interaction with LigD.

It belongs to the prokaryotic Ku family. Homodimer. Interacts with LigD.

Its function is as follows. With LigD forms a non-homologous end joining (NHEJ) DNA repair enzyme, which repairs dsDNA breaks with reduced fidelity. Binds linear dsDNA with 5'- and 3'- overhangs but not closed circular dsDNA nor ssDNA. Recruits and stimulates the ligase activity of LigD. The protein is Non-homologous end joining protein Ku (mku) of Mycobacterium tuberculosis (strain CDC 1551 / Oshkosh).